A 299-amino-acid polypeptide reads, in one-letter code: 4-diphosphocytidyl-2-C-methyl-D-erythritol kinase (299 aa).

The active site involves lysine 18. 104–114 (PIASGIGGGSS) lines the ATP pocket. Residue aspartate 146 is part of the active site.

This sequence belongs to the GHMP kinase family. IspE subfamily.

The enzyme catalyses 4-CDP-2-C-methyl-D-erythritol + ATP = 4-CDP-2-C-methyl-D-erythritol 2-phosphate + ADP + H(+). It participates in isoprenoid biosynthesis; isopentenyl diphosphate biosynthesis via DXP pathway; isopentenyl diphosphate from 1-deoxy-D-xylulose 5-phosphate: step 3/6. Functionally, catalyzes the phosphorylation of the position 2 hydroxy group of 4-diphosphocytidyl-2C-methyl-D-erythritol. This is 4-diphosphocytidyl-2-C-methyl-D-erythritol kinase from Brucella abortus biovar 1 (strain 9-941).